We begin with the raw amino-acid sequence, 59 residues long: Small, acid-soluble spore protein H (59 aa).

The protein belongs to the SspH family.

The protein resides in the spore core. This Bacillus licheniformis (strain ATCC 14580 / DSM 13 / JCM 2505 / CCUG 7422 / NBRC 12200 / NCIMB 9375 / NCTC 10341 / NRRL NRS-1264 / Gibson 46) protein is Small, acid-soluble spore protein H.